Consider the following 588-residue polypeptide: Calcium/calmodulin-dependent protein kinase kinase 2 (588 aa).

Residues 1 to 14 (MSSCVSSQPSSNRA) show a composition bias toward polar residues. Disordered regions lie at residues 1–33 (MSSC…SQKP) and 78–100 (GQEV…RKLS). The residue at position 2 (S2) is an N-acetylserine. Phosphoserine is present on residues S100, S114, S129, S133, and S137. Over residues 128-139 (YSPVSSPQSSPR) the composition is skewed to low complexity. The disordered stretch occupies residues 128 to 149 (YSPVSSPQSSPRLPRRPTVESH). The region spanning 165–446 (YTLKDEIGKG…VPEIKLHPWV (282 aa)) is the Protein kinase domain. ATP contacts are provided by residues 171–179 (IGKGSYGVV) and K194. Residues 204–226 (QAGFPRRPPPRGTRPAPGGCIQP) are RP domain. Positions 205-225 (AGFPRRPPPRGTRPAPGGCIQ) are disordered. The active-site Proton acceptor is the D312. An autoinhibitory domain region spans residues 472–477 (ENSVKH). The calmodulin-binding stretch occupies residues 475–500 (VKHIPSLATVILVKTMIRKRSFGNPF). Phosphoserine is present on residues P479, S495, S511, T522, and S572. Residues 497–588 (GNPFEGSRRE…LRPEEAMEPE (92 aa)) are disordered. Basic and acidic residues predominate over residues 521 to 536 (PTRECESLSELKEARQ). Residues 579–588 (LRPEEAMEPE) show a composition bias toward basic and acidic residues.

Belongs to the protein kinase superfamily. Ser/Thr protein kinase family. As to quaternary structure, interacts with calmodulin. Autophosphorylated and phosphorylated by PKA. Each isoform may show a different pattern of phosphorylation. In terms of tissue distribution, ubiquitously expressed with higher levels in the brain. Intermediate levels are detected in spleen, prostate, thyroid and leukocytes. The lowest level is in lung.

It localises to the nucleus. It is found in the cytoplasm. Its subcellular location is the cell projection. The protein localises to the neuron projection. The catalysed reaction is L-seryl-[protein] + ATP = O-phospho-L-seryl-[protein] + ADP + H(+). It carries out the reaction L-threonyl-[protein] + ATP = O-phospho-L-threonyl-[protein] + ADP + H(+). Activated by Ca(2+)/calmodulin. Binding of calmodulin may relieve intrasteric autoinhibition. Autophosphorylation does not alter activity or regulation by Ca(2+)/calmodulin. In part, activity is independent on Ca(2+)/calmodulin. Functionally, calcium/calmodulin-dependent protein kinase belonging to a proposed calcium-triggered signaling cascade involved in a number of cellular processes. Isoform 1, isoform 2 and isoform 3 phosphorylate CAMK1 and CAMK4. Isoform 3 phosphorylates CAMK1D. Isoform 4, isoform 5 and isoform 6 lacking part of the calmodulin-binding domain are inactive. Efficiently phosphorylates 5'-AMP-activated protein kinase (AMPK) trimer, including that consisting of PRKAA1, PRKAB1 and PRKAG1. This phosphorylation is stimulated in response to Ca(2+) signals. Seems to be involved in hippocampal activation of CREB1. May play a role in neurite growth. Isoform 3 may promote neurite elongation, while isoform 1 may promoter neurite branching. This is Calcium/calmodulin-dependent protein kinase kinase 2 (CAMKK2) from Homo sapiens (Human).